A 274-amino-acid chain; its full sequence is Protein-export membrane protein SecF (274 aa).

6 consecutive transmembrane segments (helical) span residues 14–34 (LLIL…ALGV), 121–141 (SVKV…FAIF), 143–163 (KPLL…DALG), 175–197 (ASFA…LSMY), 217–237 (TGIT…LLSM), and 247–267 (VVIF…AWVI).

Belongs to the SecD/SecF family. SecF subfamily. In terms of assembly, part of the protein translocation apparatus. Forms a complex with SecD.

The protein resides in the cell membrane. Its function is as follows. Involved in protein export. This chain is Protein-export membrane protein SecF, found in Methanopyrus kandleri (strain AV19 / DSM 6324 / JCM 9639 / NBRC 100938).